The chain runs to 61 residues: Myrmicitoxin(1)-Pm5a (61 aa).

Positions 1-23 (MKAIIFLFAVLTVVAIIIPIISG) are cleaved as a signal peptide. Positions 24–33 (EPNAGPLAAS) are excised as a propeptide. The residue at position 60 (Gln-60) is a Glutamine amide.

It belongs to the formicidae venom clade 2 family. Expressed by the venom gland.

Its subcellular location is the secreted. In terms of biological role, toxin that causes a rapid and irreversible paralysis when intrathoracically injected into insects (blowflies). Does not cause spontaneous nocifensive behaviors by intraplantar injection in mice. This Pogonomyrmex maricopa (Maricopa harvester ant) protein is Myrmicitoxin(1)-Pm5a.